Consider the following 165-residue polypeptide: RxLR effector protein PITG_09218 (165 aa).

Residues 1-24 form the signal peptide; that stretch reads MRFSAFLTLLLVAFVASCSTFASA. The RxLR-dEER signature appears at 31–57; sequence RRLRADAAPVPVNKDNVAKLAGGFLEK. A helical transmembrane segment spans residues 129–149; the sequence is VTLGATVAGFAIYGAYKALFD.

Belongs to the RxLR effector family.

Its subcellular location is the secreted. It localises to the host mitochondrion membrane. The protein resides in the host endoplasmic reticulum membrane. In terms of biological role, effector that enhances P.infestans colonization of Nicotiana benthamiana leaves. The protein is RxLR effector protein PITG_09218 of Phytophthora infestans (strain T30-4) (Potato late blight agent).